A 193-amino-acid chain; its full sequence is uncharacterized protein (193 aa).

Positions 55-94 are disordered; the sequence is PVGGAAGARSLSQALPAPAPPPPPPPGLGPSSERPWPSPW. The segment covering 71 to 82 has biased composition (pro residues); that stretch reads APAPPPPPPPGL.

This is an uncharacterized protein from Homo sapiens (Human).